The primary structure comprises 198 residues: Cell division protein SepF (198 aa).

The tract at residues 170–198 (EVPQPPARPARPASTNPPAWGNETNRMAQ) is disordered. The segment covering 179–188 (ARPASTNPPA) has biased composition (low complexity).

Belongs to the SepF family. As to quaternary structure, homodimer. Interacts with FtsZ.

The protein localises to the cytoplasm. Its function is as follows. Cell division protein that is part of the divisome complex and is recruited early to the Z-ring. Probably stimulates Z-ring formation, perhaps through the cross-linking of FtsZ protofilaments. Its function overlaps with FtsA. The protein is Cell division protein SepF of Trichormus variabilis (strain ATCC 29413 / PCC 7937) (Anabaena variabilis).